A 535-amino-acid polypeptide reads, in one-letter code: Ribonuclease Y (535 aa).

Residues 4 to 24 form a helical membrane-spanning segment; it reads IILAMVCALIGLIIGYVAISM. The tract at residues 107–145 is disordered; that stretch reads TDRASSLDRKDENLSNKEKMLDSKEQSLTDKSRHINERE. Positions 225–285 constitute a KH domain; that stretch reads TITTVHLPDD…IRREIARMTL (61 aa). Positions 351 to 444 constitute an HD domain; sequence VLRHSVEVGK…VAAADALSSA (94 aa).

The protein belongs to the RNase Y family.

It localises to the cell membrane. Functionally, endoribonuclease that initiates mRNA decay. This is Ribonuclease Y from Streptococcus agalactiae serotype Ia (strain ATCC 27591 / A909 / CDC SS700).